Consider the following 431-residue polypeptide: Glutamate-1-semialdehyde 2,1-aminomutase (431 aa).

An N6-(pyridoxal phosphate)lysine modification is found at lysine 264.

Belongs to the class-III pyridoxal-phosphate-dependent aminotransferase family. HemL subfamily. As to quaternary structure, homodimer. Requires pyridoxal 5'-phosphate as cofactor.

It is found in the cytoplasm. It carries out the reaction (S)-4-amino-5-oxopentanoate = 5-aminolevulinate. It participates in porphyrin-containing compound metabolism; protoporphyrin-IX biosynthesis; 5-aminolevulinate from L-glutamyl-tRNA(Glu): step 2/2. This is Glutamate-1-semialdehyde 2,1-aminomutase from Clostridium beijerinckii (strain ATCC 51743 / NCIMB 8052) (Clostridium acetobutylicum).